Reading from the N-terminus, the 93-residue chain is Small ribosomal subunit protein bS18c (93 aa).

The protein belongs to the bacterial ribosomal protein bS18 family. As to quaternary structure, part of the 30S ribosomal subunit.

The protein resides in the plastid. The protein localises to the chloroplast. This Pinus koraiensis (Korean pine) protein is Small ribosomal subunit protein bS18c.